Consider the following 439-residue polypeptide: GTPase Der (439 aa).

2 EngA-type G domains span residues 4–168 and 177–352; these read PIVA…KDDE and INIA…DNYN. GTP contacts are provided by residues 10 to 17, 57 to 61, 120 to 123, 183 to 190, 230 to 234, and 295 to 298; these read GRPNVGKS, DTGGI, NKID, GKPNVGKS, DTAGL, and NKWD. Residues 353–437 form the KH-like domain; sequence KRVKTGVLND…GIKSEFRERK (85 aa).

It belongs to the TRAFAC class TrmE-Era-EngA-EngB-Septin-like GTPase superfamily. EngA (Der) GTPase family. As to quaternary structure, associates with the 50S ribosomal subunit.

In terms of biological role, GTPase that plays an essential role in the late steps of ribosome biogenesis. The protein is GTPase Der of Clostridium botulinum (strain ATCC 19397 / Type A).